A 406-amino-acid polypeptide reads, in one-letter code: Type IV pilus assembly protein PilC (406 aa).

The next 4 helical transmembrane spans lie at 69–91 (IFSR…LAIL), 171–191 (YPVI…TGIV), 211–231 (FLIA…LLAV), and 377–397 (MIIF…LPLF).

The protein belongs to the GSP F family. Homotetramer. Interacts with PilB.

It is found in the cell inner membrane. Essential inner membrane component of the type IV pilus (T4P) that plays a role in surface and host cell adhesion, colonization, biofilm maturation, virulence, and twitching, a form of surface-associated motility facilitated by cycles of extension, adhesion, and retraction of T4P fibers. Controls both pilus assembly and disassembly and plays an important role in PilB localization to the complex and ATPase activity. This is Type IV pilus assembly protein PilC from Thermus thermophilus (strain ATCC 27634 / DSM 579 / HB8).